We begin with the raw amino-acid sequence, 480 residues long: MDEAKEENRRLKSSLSKIKKDFDILQTQYNQLMAKHNEPTKFQSKGHHQDKGEDEDREKVNEREELVSLSLGRRLNSEVPSGSNKEEKNKDVEEAEGDRNYDDNEKSSIQGLSMGIEYKALSNPNEKLEIDHNQETMSLEISNNNKIRSQNSFGFKNDGDDHEDEDEILPQNLVKKTRVSVRSRCETPTMNDGCQWRKYGQKIAKGNPCPRAYYRCTIAASCPVRKQVQRCSEDMSILISTYEGTHNHPLPMSATAMASATSAAASMLLSGASSSSSAAADLHGLNFSLSGNNITPKPKTHFLQSPSSSGHPTVTLDLTTSSSSQQPFLSMLNRFSSPPSNVSRSNSYPSTNLNFSNNTNTLMNWGGGGNPSDQYRAAYGNINTHQQSPYHKIIQTRTAGSSFDPFGRSSSSHSPQINLDHIGIKNIISHQVPSLPAETIKAITTDPSFQSALATALSSIMGGDLKIDHNVTRNEAEKSP.

Residues 30 to 108 (NQLMAKHNEP…RNYDDNEKSS (79 aa)) are disordered. 2 stretches are compositionally biased toward basic and acidic residues: residues 57–66 (REKVNEREEL) and 84–106 (NKEE…DNEK). Residues 185 to 251 (CETPTMNDGC…YEGTHNHPLP (67 aa)) constitute a DNA-binding region (WRKY).

Its subcellular location is the nucleus. In terms of biological role, transcription factor. Interacts specifically with the W box (5'-(T)TGAC[CT]-3'), a frequently occurring elicitor-responsive cis-acting element. The protein is Probable WRKY transcription factor 61 (WRKY61) of Arabidopsis thaliana (Mouse-ear cress).